Reading from the N-terminus, the 325-residue chain is Phenylalanine--tRNA ligase alpha subunit (325 aa).

E251 lines the Mg(2+) pocket.

This sequence belongs to the class-II aminoacyl-tRNA synthetase family. Phe-tRNA synthetase alpha subunit type 1 subfamily. As to quaternary structure, tetramer of two alpha and two beta subunits. Mg(2+) serves as cofactor.

The protein localises to the cytoplasm. The catalysed reaction is tRNA(Phe) + L-phenylalanine + ATP = L-phenylalanyl-tRNA(Phe) + AMP + diphosphate + H(+). The chain is Phenylalanine--tRNA ligase alpha subunit (pheS) from Thermotoga maritima (strain ATCC 43589 / DSM 3109 / JCM 10099 / NBRC 100826 / MSB8).